We begin with the raw amino-acid sequence, 337 residues long: Transcription factor bHLH121 (337 aa).

The bHLH domain maps to 58 to 108 (ARKSQKAGREKLRREKLNEHFVELGNVLDPERPKNDKATILTDTVQLLKEL). Residues 235-337 (VHIPQNPGNR…AGGQKPDDAK (103 aa)) form a disordered region. Basic and acidic residues-rich tracts occupy residues 244–263 (RSRE…KAED) and 280–291 (SDKDTLQRPEKT). Residues 297–317 (NNNNNSIEESSHSSKCSSSPS) are compositionally biased toward low complexity.

In terms of assembly, homodimer. As to expression, expressed constitutively in roots, leaves, stems, and flowers.

It localises to the nucleus. The polypeptide is Transcription factor bHLH121 (BHLH121) (Arabidopsis thaliana (Mouse-ear cress)).